The primary structure comprises 478 residues: UDP-N-acetylmuramate--L-alanine ligase (478 aa).

125–131 (GTHGKTT) contacts ATP.

Belongs to the MurCDEF family.

It localises to the cytoplasm. The catalysed reaction is UDP-N-acetyl-alpha-D-muramate + L-alanine + ATP = UDP-N-acetyl-alpha-D-muramoyl-L-alanine + ADP + phosphate + H(+). Its pathway is cell wall biogenesis; peptidoglycan biosynthesis. Functionally, cell wall formation. The polypeptide is UDP-N-acetylmuramate--L-alanine ligase (Dichelobacter nodosus (strain VCS1703A)).